The following is a 306-amino-acid chain: Type 2A encapsulin shell protein SrpI (306 aa).

It belongs to the encapsulin family. Family 2A subfamily. In terms of assembly, the 24.5 nm encapsulin nanocompartment is formed by 60 subunits; monomers form pentamers which assemble to form shells. There are 12 positively charged pores where the pentamers meet with a minimal pore diameter of 3.7 Angstroms as well 3-fold axis channels and dimer channels.

It is found in the encapsulin nanocompartment. Functionally, shell component of a type 2A encapsulin nanocompartment. Expression in E.coli generates nanocompartments with an average diameter of 25 nm. They can be disassembled by treatment with 6M guanidine hydrochloride and reassembled with cargo. The nanocompartment is probably involved in sulfur metabolism. Probably allows passage of cysteine into its interior; during growth in light the physiological pH is 8-8.4, about 30-54% of free cysteine (charge -1) would be able to pass through the shell. The protein is Type 2A encapsulin shell protein SrpI of Synechococcus elongatus (strain ATCC 33912 / PCC 7942 / FACHB-805) (Anacystis nidulans R2).